The sequence spans 303 residues: Caspase-7 (303 aa).

Over residues 1-21 (MADDQGCIEEQGVEDSANEDS) the composition is skewed to acidic residues. The interval 1-30 (MADDQGCIEEQGVEDSANEDSVDAKPDRSS) is disordered. Position 2 is an N-acetylalanine (A2). Positions 2-23 (ADDQGCIEEQGVEDSANEDSVD) are cleaved as a propeptide — N-terminally processed. S30 carries the phosphoserine; by PAK2 modification. Position 37 is a phosphoserine (S37). Residues 38–41 (KKKK) form an exosite region. The interval 76-87 (KNFDKVTGMGVR) is loop L1. Residue H144 is part of the active site. T173 is subject to Phosphothreonine; by PAK2. Residue C186 is part of the active site. Positions 187–196 (RGTELDDGIQ) are loop L2. The propeptide occupies 199–206 (SGPINDTD). The loop L3 stretch occupies residues 226-238 (VPGYYSWRSPGRG). (Microbial infection) ADP-riboxanated arginine is present on R233. At S239 the chain carries Phosphoserine; by PAK2. The tract at residues 274 to 288 (ESQSDDPHFHEKKQI) is loop L4.

Belongs to the peptidase C14A family. Heterotetramer that consists of two anti-parallel arranged heterodimers, each one formed by a 20 kDa (p20) and a 11 kDa (p11) subunit. Interacts with XIAP (via its second BIR domain); inhibiting CASP7 activity. Interacts with BIRC6/bruce. Interacts with ATXN3 (short isoform 1). Interacts with HSPA5. In terms of processing, cleavage by different proteases, such as granzyme B (GZMB), caspase-1 (CASP1), caspase-8 (CASP8), caspase-9 (CASP9) or caspase-10 (CASP10) generate the two active subunits. Its involvement in different programmed cell death processes is probably specified by the protease that activates CASP7. Cleaved and activated by initiator caspases (CASP8, CASP9 and/or CASP10), leading to execution phase of apoptosis. Cleavage and maturation by GZMB regulates granzyme-mediated programmed cell death. Cleaved and activated by CASP1 in response to bacterial infection. Propeptide domains can also be cleaved efficiently by CASP3. Active heterodimers between the small subunit of caspase-7 and the large subunit of CASP3, and vice versa, also occur. Also cleaved at the N-terminus at alternative sites by CAPN1, leading to its activation. Phosphorylation at Ser-30 and Ser-239 by PAK2 inhibits its activity. Phosphorylation at Ser-30 prevents cleavage and activation by initiator caspase CASP9, while phosphorylation at Ser-239 prevents thiol protease activity by preventing substrate-binding. Post-translationally, (Microbial infection) ADP-riboxanation by C.violaceum CopC blocks CASP7 processing, preventing CASP7 activation and ability to recognize and cleave substrates. In terms of processing, ubiquitinated by BIRC6; this activity is inhibited by DIABLO/SMAC. Highly expressed in lung, skeletal muscle, liver, kidney, spleen and heart, and moderately in testis. No expression in the brain.

It localises to the cytoplasm. The protein resides in the cytosol. Its subcellular location is the nucleus. It is found in the secreted. The protein localises to the extracellular space. It catalyses the reaction Strict requirement for an Asp residue at position P1 and has a preferred cleavage sequence of Asp-Glu-Val-Asp-|-.. Its activity is regulated as follows. During activation, the N-terminal disordered prodomain is removed by cleavage. Concomitantly, double cleavage gives rise to a large Caspase-7 subunit p20 and a small Caspase-7 subunit p11. The two large and two small subunits then assemble to form the active CASP7 complex. Can be cleaved and activated by different caspases, depending on the context. Cleaved and activated by initiator caspases (CASP8, CASP9 and/or CASP10), leading to execution phase of apoptosis. Inhibited by XIAP, which directly binds to the active site pocket and obstructs substrate entry. Cleavage and maturation by GZMB regulates granzyme-mediated programmed cell death. Cleavage and maturation by CASP1 regulates pyroptosis. Phosphorylation at Ser-30 and Ser-239 by PAK2 inhibits its activity. Inhibited by isatin sulfonamides. Inhibited by 2-(2,4-Dichlorophenoxy)- N-(2-mercapto-ethyl)-acetamide (DICA) and 5-Fluoro-1H-indole-2- carboxylic acid (2-mercapto-ethyl)-amide (FICA) allosteric inhibitors, which disrupt an interaction between Arg-187 and Tyr-223. Specifically inhibited by DARPin D7.18 and D7.43, which specifically bind to the precursor CASP7 and prevent its processing and activation. Inhibited by BIRC6; following inhibition of BIRC6-caspase binding by DIABLO/SMAC, BIRC6 is subjected to caspase cleavage, leading to an increase in active caspases. Thiol protease involved in different programmed cell death processes, such as apoptosis, pyroptosis or granzyme-mediated programmed cell death, by proteolytically cleaving target proteins. Has a marked preference for Asp-Glu-Val-Asp (DEVD) consensus sequences, with some plasticity for alternate non-canonical sequences. Its involvement in the different programmed cell death processes is probably determined by upstream proteases that activate CASP7. Acts as an effector caspase involved in the execution phase of apoptosis: following cleavage and activation by initiator caspases (CASP8, CASP9 and/or CASP10), mediates execution of apoptosis by catalyzing cleavage of proteins, such as CLSPN, PARP1, PTGES3 and YY1. Compared to CASP3, acts as a minor executioner caspase and cleaves a limited set of target proteins. Acts as a key regulator of the inflammatory response in response to bacterial infection by catalyzing cleavage and activation of the sphingomyelin phosphodiesterase SMPD1 in the extracellular milieu, thereby promoting membrane repair. Regulates pyroptosis in intestinal epithelial cells: cleaved and activated by CASP1 in response to S.typhimurium infection, promoting its secretion to the extracellular milieu, where it catalyzes activation of SMPD1, generating ceramides that repair membranes and counteract the action of gasdermin-D (GSDMD) pores. Regulates granzyme-mediated programmed cell death in hepatocytes: cleaved and activated by granzyme B (GZMB) in response to bacterial infection, promoting its secretion to the extracellular milieu, where it catalyzes activation of SMPD1, generating ceramides that repair membranes and counteract the action of perforin (PRF1) pores. Following cleavage by CASP1 in response to inflammasome activation, catalyzes processing and inactivation of PARP1, alleviating the transcription repressor activity of PARP1. Acts as an inhibitor of type I interferon production during virus-induced apoptosis by mediating cleavage of antiviral proteins CGAS, IRF3 and MAVS, thereby preventing cytokine overproduction. Cleaves and activates sterol regulatory element binding proteins (SREBPs). Cleaves phospholipid scramblase proteins XKR4, XKR8 and XKR9. In case of infection, catalyzes cleavage of Kaposi sarcoma-associated herpesvirus protein ORF57, thereby preventing expression of viral lytic genes. Cleaves BIRC6 following inhibition of BIRC6-caspase binding by DIABLO/SMAC. Functionally, lacks enzymatic activity. The chain is Caspase-7 from Homo sapiens (Human).